A 512-amino-acid chain; its full sequence is Lysine--tRNA ligase (512 aa).

The Mg(2+) site is built by Glu-408 and Glu-415.

The protein belongs to the class-II aminoacyl-tRNA synthetase family. As to quaternary structure, homodimer. Mg(2+) serves as cofactor.

Its subcellular location is the cytoplasm. It carries out the reaction tRNA(Lys) + L-lysine + ATP = L-lysyl-tRNA(Lys) + AMP + diphosphate. The protein is Lysine--tRNA ligase of Prochlorococcus marinus (strain MIT 9312).